We begin with the raw amino-acid sequence, 115 residues long: MNETLLKCTTRHVRIFTARVENNDLVPDPDQLTLDLDPDNEFLWTESVIKEIQQRFAELVASHAGGELSDYNLRKIGSELEGTIRKLLQAGKLSYNPECRVLNYSMGLPRTPELL.

It belongs to the complex I NdhM subunit family. As to quaternary structure, NDH-1 can be composed of about 15 different subunits; different subcomplexes with different compositions have been identified which probably have different functions.

It localises to the cellular thylakoid membrane. The enzyme catalyses a plastoquinone + NADH + (n+1) H(+)(in) = a plastoquinol + NAD(+) + n H(+)(out). It catalyses the reaction a plastoquinone + NADPH + (n+1) H(+)(in) = a plastoquinol + NADP(+) + n H(+)(out). Its function is as follows. NDH-1 shuttles electrons from an unknown electron donor, via FMN and iron-sulfur (Fe-S) centers, to quinones in the respiratory and/or the photosynthetic chain. The immediate electron acceptor for the enzyme in this species is believed to be plastoquinone. Couples the redox reaction to proton translocation, and thus conserves the redox energy in a proton gradient. Cyanobacterial NDH-1 also plays a role in inorganic carbon-concentration. This Prochlorococcus marinus (strain MIT 9303) protein is NAD(P)H-quinone oxidoreductase subunit M.